Here is a 64-residue protein sequence, read N- to C-terminus: Large ribosomal subunit protein bL35 (64 aa).

2 stretches are compositionally biased toward basic residues: residues M1–K15 and A27–R42. The tract at residues M1–T45 is disordered.

Belongs to the bacterial ribosomal protein bL35 family.

The protein is Large ribosomal subunit protein bL35 of Streptomyces griseus subsp. griseus (strain JCM 4626 / CBS 651.72 / NBRC 13350 / KCC S-0626 / ISP 5235).